Reading from the N-terminus, the 212-residue chain is Interleukin-6 (212 aa).

A signal peptide spans 1–27; it reads MNSFSTSAFGPVAFSLGLLLVLPAAFP. An intrachain disulfide couples C72 to C78. N73 carries an N-linked (GlcNAc...) asparagine glycan. A Phosphoserine modification is found at S81. A disulfide bond links C101 and C111. N172 is a glycosylation site (N-linked (GlcNAc...) asparagine).

It belongs to the IL-6 superfamily. As to quaternary structure, component of a hexamer of two molecules each of IL6, IL6R and IL6ST; first binds to IL6R to associate with the signaling subunit IL6ST. Interacts with IL6R (via the N-terminal ectodomain); this interaction may be affected by IL6R-binding with SORL1, hence decreasing IL6 cis signaling. Interacts with SORL1 (via the N-terminal ectodomain); this interaction leads to IL6 internalization and lysosomal degradation. May form a trimeric complex with the soluble SORL1 ectodomain and soluble IL6R receptor; this interaction might stabilize circulating IL6, hence promoting IL6 trans signaling.

The protein localises to the secreted. Functionally, cytokine with a wide variety of biological functions in immunity, tissue regeneration, and metabolism. Binds to IL6R, then the complex associates to the signaling subunit IL6ST/gp130 to trigger the intracellular IL6-signaling pathway. The interaction with the membrane-bound IL6R and IL6ST stimulates 'classic signaling', whereas the binding of IL6 and soluble IL6R to IL6ST stimulates 'trans-signaling'. Alternatively, 'cluster signaling' occurs when membrane-bound IL6:IL6R complexes on transmitter cells activate IL6ST receptors on neighboring receiver cells. In terms of biological role, IL6 is a potent inducer of the acute phase response. Rapid production of IL6 contributes to host defense during infection and tissue injury, but excessive IL6 synthesis is involved in disease pathology. In the innate immune response, is synthesized by myeloid cells, such as macrophages and dendritic cells, upon recognition of pathogens through toll-like receptors (TLRs) at the site of infection or tissue injury. In the adaptive immune response, is required for the differentiation of B cells into immunoglobulin-secreting cells. Plays a major role in the differentiation of CD4(+) T cell subsets. Essential factor for the development of T follicular helper (Tfh) cells that are required for the induction of germinal-center formation. Required to drive naive CD4(+) T cells to the Th17 lineage. Also required for proliferation of myeloma cells and the survival of plasmablast cells. Acts as an essential factor in bone homeostasis and on vessels directly or indirectly by induction of VEGF, resulting in increased angiogenesis activity and vascular permeability. Induces, through 'trans-signaling' and synergistically with IL1B and TNF, the production of VEGF. Involved in metabolic controls, is discharged into the bloodstream after muscle contraction increasing lipolysis and improving insulin resistance. 'Trans-signaling' in central nervous system also regulates energy and glucose homeostasis. Mediates, through GLP-1, crosstalk between insulin-sensitive tissues, intestinal L cells and pancreatic islets to adapt to changes in insulin demand. Also acts as a myokine. Plays a protective role during liver injury, being required for maintenance of tissue regeneration. Also has a pivotal role in iron metabolism by regulating HAMP/hepcidin expression upon inflammation or bacterial infection. Through activation of IL6ST-YAP-NOTCH pathway, induces inflammation-induced epithelial regeneration. The sequence is that of Interleukin-6 (IL6) from Macaca mulatta (Rhesus macaque).